A 74-amino-acid polypeptide reads, in one-letter code: Cytochrome c oxidase subunit 2 (74 aa).

Topologically, residues 1-14 (MAHPMQLGFQDAAS) are mitochondrial intermembrane. Residues 15-45 (PVMEELLHFHDHALMIVFLISTAVLYIIVVT) form a helical membrane-spanning segment. At 46-74 (VTTKLTDKYVLDAQEIEMVWTIMPAVVLI) the chain is on the mitochondrial matrix side.

The protein belongs to the cytochrome c oxidase subunit 2 family. Component of the cytochrome c oxidase (complex IV, CIV), a multisubunit enzyme composed of 14 subunits. The complex is composed of a catalytic core of 3 subunits MT-CO1, MT-CO2 and MT-CO3, encoded in the mitochondrial DNA, and 11 supernumerary subunits COX4I, COX5A, COX5B, COX6A, COX6B, COX6C, COX7A, COX7B, COX7C, COX8 and NDUFA4, which are encoded in the nuclear genome. The complex exists as a monomer or a dimer and forms supercomplexes (SCs) in the inner mitochondrial membrane with NADH-ubiquinone oxidoreductase (complex I, CI) and ubiquinol-cytochrome c oxidoreductase (cytochrome b-c1 complex, complex III, CIII), resulting in different assemblies (supercomplex SCI(1)III(2)IV(1) and megacomplex MCI(2)III(2)IV(2)). Found in a complex with TMEM177, COA6, COX18, COX20, SCO1 and SCO2. Interacts with TMEM177 in a COX20-dependent manner. Interacts with COX20. Interacts with COX16. Cu cation is required as a cofactor.

The protein localises to the mitochondrion inner membrane. It catalyses the reaction 4 Fe(II)-[cytochrome c] + O2 + 8 H(+)(in) = 4 Fe(III)-[cytochrome c] + 2 H2O + 4 H(+)(out). Its function is as follows. Component of the cytochrome c oxidase, the last enzyme in the mitochondrial electron transport chain which drives oxidative phosphorylation. The respiratory chain contains 3 multisubunit complexes succinate dehydrogenase (complex II, CII), ubiquinol-cytochrome c oxidoreductase (cytochrome b-c1 complex, complex III, CIII) and cytochrome c oxidase (complex IV, CIV), that cooperate to transfer electrons derived from NADH and succinate to molecular oxygen, creating an electrochemical gradient over the inner membrane that drives transmembrane transport and the ATP synthase. Cytochrome c oxidase is the component of the respiratory chain that catalyzes the reduction of oxygen to water. Electrons originating from reduced cytochrome c in the intermembrane space (IMS) are transferred via the dinuclear copper A center (CU(A)) of subunit 2 and heme A of subunit 1 to the active site in subunit 1, a binuclear center (BNC) formed by heme A3 and copper B (CU(B)). The BNC reduces molecular oxygen to 2 water molecules using 4 electrons from cytochrome c in the IMS and 4 protons from the mitochondrial matrix. In Amia calva (Bowfin), this protein is Cytochrome c oxidase subunit 2 (mt-co2).